Consider the following 73-residue polypeptide: Translation initiation factor IF-1 (73 aa).

One can recognise an S1-like domain in the interval 1-72 (MAKEDAIEVE…NRGRITYRSK (72 aa)).

This sequence belongs to the IF-1 family. In terms of assembly, component of the 30S ribosomal translation pre-initiation complex which assembles on the 30S ribosome in the order IF-2 and IF-3, IF-1 and N-formylmethionyl-tRNA(fMet); mRNA recruitment can occur at any time during PIC assembly.

The protein resides in the cytoplasm. One of the essential components for the initiation of protein synthesis. Stabilizes the binding of IF-2 and IF-3 on the 30S subunit to which N-formylmethionyl-tRNA(fMet) subsequently binds. Helps modulate mRNA selection, yielding the 30S pre-initiation complex (PIC). Upon addition of the 50S ribosomal subunit IF-1, IF-2 and IF-3 are released leaving the mature 70S translation initiation complex. The protein is Translation initiation factor IF-1 of Syntrophobacter fumaroxidans (strain DSM 10017 / MPOB).